Reading from the N-terminus, the 417-residue chain is Serine hydroxymethyltransferase (417 aa).

Residues Leu120 and 124 to 126 contribute to the (6S)-5,6,7,8-tetrahydrofolate site; that span reads GHL. The residue at position 229 (Lys229) is an N6-(pyridoxal phosphate)lysine. 354–356 serves as a coordination point for (6S)-5,6,7,8-tetrahydrofolate; the sequence is SPF.

The protein belongs to the SHMT family. Homodimer. It depends on pyridoxal 5'-phosphate as a cofactor.

It localises to the cytoplasm. It catalyses the reaction (6R)-5,10-methylene-5,6,7,8-tetrahydrofolate + glycine + H2O = (6S)-5,6,7,8-tetrahydrofolate + L-serine. The protein operates within one-carbon metabolism; tetrahydrofolate interconversion. Its pathway is amino-acid biosynthesis; glycine biosynthesis; glycine from L-serine: step 1/1. Functionally, catalyzes the reversible interconversion of serine and glycine with tetrahydrofolate (THF) serving as the one-carbon carrier. This reaction serves as the major source of one-carbon groups required for the biosynthesis of purines, thymidylate, methionine, and other important biomolecules. Also exhibits THF-independent aldolase activity toward beta-hydroxyamino acids, producing glycine and aldehydes, via a retro-aldol mechanism. The protein is Serine hydroxymethyltransferase of Acinetobacter baylyi (strain ATCC 33305 / BD413 / ADP1).